Reading from the N-terminus, the 300-residue chain is Fatty acid hydroxylase uhd1 (300 aa).

Residues 14–20, Arg39, 63–64, 83–85, Tyr156, Lys160, 183–186, and Ser199 each bind NADP(+); these read GANGFVG, DL, VAS, and PVYI. Lys160 (proton donor) is an active-site residue.

Belongs to the NAD(P)-dependent epimerase/dehydratase family. Dihydroflavonol-4-reductase subfamily.

It participates in secondary metabolite biosynthesis. Fatty acid hydroxylase; part of the gene cluster that mediates the biosynthesis of the glycolipid biosurfactant ustilagic acid (UA). UA is a secreted cellobiose glycolipid that is toxic for many microorganisms and confers biocontrol activity to U.maydis. UA consists of 15,16-dihydroxypalmitic or 2,15,16-trihydroxypalmitic acid, which is O-glycosidically linked to cellobiose at its terminal hydroxyl group. In addition, the cellobiose moiety is acetylated and acylated with a short-chain hydroxy fatty acid. UA biosynthesis starts with omega-hydroxylation of palmitic acid catalyzed by the cytochrome P450 monooxygenase cyp1. Terminal hydroxylation of palmitic acid precedes subterminal hydroxylation catalyzed by the cytochrome P450 monooxygenase cyp2. Sequential glucosylation of the hydroxy fatty acid is probably catalyzed by the glycosyltransferase ugt1. The cellobiose lipid is further decorated by acetylation of the proximal glucose residue and by acylation with a short-chain beta-hydroxy fatty acid at the distal glucose residue. The acyltransferase uat1 may be a good candidate for catalyzing either acetylation or acylation of the cellobiose lipid. The fatty acid synthase fas2 may be involved in synthesis of the carbon backbone of the short-chain beta-hydroxy fatty acid esterified to the cellobiose disaccharide. The secreted UA consists of a mixture of both alpha-hydroxylated and non-hydroxylated glycolipids; therefore, alpha-hydroxylation of the long-chain fatty, catalyzed by the fatty acid hydroxylase ahd1, occurs late in UA biosynthesis and may be the last step before secretion. The protein is Fatty acid hydroxylase uhd1 of Mycosarcoma maydis (Corn smut fungus).